The sequence spans 478 residues: H(+)/Cl(-) exchange transporter ClcA (478 aa).

Topologically, residues 1 to 32 (MTHSTQQLSPEGVAEGKRGRLIRELVNRDKTP) are cytoplasmic. Residues 33–69 (LIILIMAAVVGVVTGLLGVAFDRGVDWVQQQRLLALA) traverse the membrane as a helical segment. Residues 70 to 76 (NVADYAL) are Periplasmic-facing. Residues 77-100 (LVWPLAFIMSALLAMMGYFLVSRF) traverse the membrane as a helical segment. The Selectivity filter part_1 motif lies at 106–110 (GSGIP). Position 107 (Ser-107) interacts with chloride. Positions 109-116 (IPEIEGAM) form an intramembrane region, helical. At 117-123 (EEMRPVR) the chain is on the cytoplasmic side. The next 2 membrane-spanning stretches (helical) occupy residues 124–141 (WWRVIPVKFIGGLGTLGA) and 148–166 (EGPMVQMGGNSGRMIVDIF). The Selectivity filter part_2 signature appears at 146-150 (GREGP). The Cytoplasmic portion of the chain corresponds to 167–176 (RLRSPEARHS). Intramembrane regions (helical) lie at residues 177 to 189 (LLATGAAAGLSAA) and 193 to 201 (PLAGILFVI). At 202–214 (EEMRSQFRYSLVS) the chain is on the cytoplasmic side. A helical membrane pass occupies residues 215 to 232 (IKAVFIGVITSTIVYRYF). At 233-252 (NGERAIIEVGKLSDAPLNTL) the chain is on the periplasmic side. A helical transmembrane segment spans residues 253–281 (WLYLLLGIIFGAVGVIFNALIFRTQDMFV). Topologically, residues 282–287 (RFHGGD) are cytoplasmic. Residues 288 to 309 (WRKLVLIGGLLGGMCGLLALLH) form a helical membrane-spanning segment. Topologically, residues 310-329 (GNAVGGGFALIPIAAAGNFS) are periplasmic. 2 helical membrane-spanning segments follow: residues 330–349 (IGMLLFIFIARVITTLLCFG) and 355–376 (GIFAPMLALGTILGTAFGLSCA). Positions 355 to 359 (GIFAP) match the Selectivity filter part_3 motif. Positions 356 and 357 each coordinate chloride. Residues 377 to 386 (HFFPQYGIEA) are Periplasmic-facing. An intramembrane region (helical) is located at residues 387-401 (GTFAIAGMGALFAAS). An intramembrane region (note=Loop between two helices) is located at residues 402 to 404 (VRA). The helical intramembrane region spans 405–416 (PLTGIVLVLEMT). Positions 417–421 (DNYQL) form an intramembrane region, note=Loop between two helices. Residues 422–438 (ILPMIVTCLGATLIAQF) form a helical membrane-spanning segment. The Cytoplasmic segment spans residues 439-478 (MGGKPLYSAILARTLAKQEQARATVIAQEPAVENTPQIGK). Tyr-445 serves as a coordination point for chloride.

This sequence belongs to the chloride channel (TC 2.A.49) family. ClcA subfamily. As to quaternary structure, homodimer.

The protein resides in the cell inner membrane. It catalyses the reaction 2 chloride(in) + H(+)(out) = 2 chloride(out) + H(+)(in). Its function is as follows. Proton-coupled chloride transporter. Functions as antiport system and exchanges two chloride ions for 1 proton. Probably acts as an electrical shunt for an outwardly-directed proton pump that is linked to amino acid decarboxylation, as part of the extreme acid resistance (XAR) response. In Yersinia pestis bv. Antiqua (strain Antiqua), this protein is H(+)/Cl(-) exchange transporter ClcA.